A 424-amino-acid chain; its full sequence is Arogenate dehydratase 4, chloroplastic (424 aa).

The N-terminal 34 residues, 1-34 (MQAATSCDLKFRSTDPTSRNKCFSHAIPKRVAVT), are a transit peptide targeting the chloroplast. Residues 126–303 (RVAYQGVPGA…NVTRFLMLAR (178 aa)) enclose the Prephenate dehydratase domain. The ACT domain maps to 319–410 (VFAAQEHKGT…SFLRVLGSYP (92 aa)).

In terms of tissue distribution, expressed in roots, leaves, stems, flowers and siliques. More abundant in stems and roots.

It localises to the plastid. The protein resides in the chloroplast stroma. The catalysed reaction is L-arogenate + H(+) = L-phenylalanine + CO2 + H2O. It functions in the pathway amino-acid biosynthesis; L-phenylalanine biosynthesis; L-phenylalanine from L-arogenate: step 1/1. Functionally, converts the prephenate produced from the shikimate-chorismate pathway into phenylalanine. The polypeptide is Arogenate dehydratase 4, chloroplastic (Arabidopsis thaliana (Mouse-ear cress)).